The sequence spans 495 residues: Galactose-1-phosphate uridylyltransferase (495 aa).

This sequence belongs to the galactose-1-phosphate uridylyltransferase type 2 family.

The protein localises to the cytoplasm. It carries out the reaction alpha-D-galactose 1-phosphate + UDP-alpha-D-glucose = alpha-D-glucose 1-phosphate + UDP-alpha-D-galactose. Its pathway is carbohydrate metabolism; galactose metabolism. This is Galactose-1-phosphate uridylyltransferase from Ligilactobacillus salivarius (strain UCC118) (Lactobacillus salivarius).